The sequence spans 493 residues: MGNYFNTLNLRQQLDQLGRCRFMEREEFADGVNFLKGKKIVIIGCGAQGLNQGLNMRDSGLDIAYALRPEAIEEKRASFQRASENGFVVGAYQQLIPTADLVINLTPDKQHSKVVADVMPLIKQGAALGYSHGLNIVEVGEKIRQDITVVMVAPKCPGTEVREEFKRGFGVPTLIAVHPENDPKGEGLAIAKAWAAATGGHRAGVLESSFVAEVKSDLMGEQTILCGMLQAGSLVCYDKLIADGKDPAYAGKLIQYGWETITEALKQGGITLMMDRLSNSAKLRAFSLSEQIKEKLDFLFKKHMDDIISGEFSRVMMEDWANGDANLLKWREQTGKTAFENAPKGENIKISEQEYFDHGVLMVAMVKAGVELAFDTMVETGIYEESAYYESLHELPLIANTIARKRLYEMNVVISDTAEYGNYLFANVAAPILAKEIIPTLKRGDLGESTPATEIDNILLRDVNDAIRQHPIELIGQELRGYMTDMKRISSQG.

A KARI N-terminal Rossmann domain is found at 14–208 (LDQLGRCRFM…GGHRAGVLES (195 aa)). Residues 45–48 (CGAQ), R68, R76, S78, and 108–110 (DKQ) contribute to the NADP(+) site. The active site involves H132. An NADP(+)-binding site is contributed by G158. KARI C-terminal knotted domains follow at residues 209 to 345 (SFVA…APKG) and 346 to 486 (ENIK…MTDM). 4 residues coordinate Mg(2+): D217, E221, E390, and E394. Residue S415 coordinates substrate.

Belongs to the ketol-acid reductoisomerase family. Mg(2+) serves as cofactor.

The enzyme catalyses (2R)-2,3-dihydroxy-3-methylbutanoate + NADP(+) = (2S)-2-acetolactate + NADPH + H(+). The catalysed reaction is (2R,3R)-2,3-dihydroxy-3-methylpentanoate + NADP(+) = (S)-2-ethyl-2-hydroxy-3-oxobutanoate + NADPH + H(+). It participates in amino-acid biosynthesis; L-isoleucine biosynthesis; L-isoleucine from 2-oxobutanoate: step 2/4. Its pathway is amino-acid biosynthesis; L-valine biosynthesis; L-valine from pyruvate: step 2/4. Involved in the biosynthesis of branched-chain amino acids (BCAA). Catalyzes an alkyl-migration followed by a ketol-acid reduction of (S)-2-acetolactate (S2AL) to yield (R)-2,3-dihydroxy-isovalerate. In the isomerase reaction, S2AL is rearranged via a Mg-dependent methyl migration to produce 3-hydroxy-3-methyl-2-ketobutyrate (HMKB). In the reductase reaction, this 2-ketoacid undergoes a metal-dependent reduction by NADPH to yield (R)-2,3-dihydroxy-isovalerate. The chain is Ketol-acid reductoisomerase (NADP(+)) from Histophilus somni (strain 129Pt) (Haemophilus somnus).